Reading from the N-terminus, the 168-residue chain is Gastrula zinc finger protein XlCGF7.1 (168 aa).

6 consecutive C2H2-type zinc fingers follow at residues 6 to 28, 34 to 56, 62 to 84, 90 to 112, 118 to 140, and 146 to 168; these read FTCTECGKGFSDKSNLRSHQRTH, FTCTECGKSFSQKIGLHNHLKCH, FMCTECGKSFSNKSNLHTHRKIH, YICTECGKTFPRKKNLQSHQTVH, FTCSECGKCFSQKKNLHTHQKIH, and FKCNECGQAFLRKRNLLSHERIH.

It belongs to the krueppel C2H2-type zinc-finger protein family.

It is found in the nucleus. May be involved in transcriptional regulation. This is Gastrula zinc finger protein XlCGF7.1 from Xenopus laevis (African clawed frog).